Reading from the N-terminus, the 120-residue chain is Large ribosomal subunit protein eL34x (120 aa).

Positions 31 to 50 are disordered; sequence TYQTTNKRASGPKCPVTGKR.

It belongs to the eukaryotic ribosomal protein eL34 family.

This is Large ribosomal subunit protein eL34x (RPL34C) from Arabidopsis thaliana (Mouse-ear cress).